Here is a 149-residue protein sequence, read N- to C-terminus: uncharacterized protein (149 aa).

The next 3 helical transmembrane spans lie at 39–61 (VPLGTLVFLFVVIITLIPLLIIG), 82–104 (VFGYSLIVSDIVGFAIVFFGAIL), and 119–141 (WMMMLGSLIALGTTANLVSSIYL).

To M.pneumoniae MPN_090.

It is found in the cell membrane. This is an uncharacterized protein from Mycoplasma pneumoniae (strain ATCC 29342 / M129 / Subtype 1) (Mycoplasmoides pneumoniae).